We begin with the raw amino-acid sequence, 620 residues long: Glutathione-regulated potassium-efflux system protein KefC (620 aa).

The next 12 membrane-spanning stretches (helical) occupy residues 4 to 24 (HTLI…PIAV), 26 to 46 (LGLG…PWGL), 54 to 74 (SILH…GLEL), 90 to 110 (GALQ…LLGL), 114 to 134 (VAEL…MQAM), 149 to 169 (FAVL…IPLL), 178 to 198 (MGAF…VVLL), 218 to 238 (VFSA…EEVG), 270 to 290 (GLLL…GTLL), 294 to 314 (LRIV…LWLI), 327 to 347 (WFAV…GAAQ), and 359 to 379 (SLTL…VILN). The RCK N-terminal domain occupies 399-518 (QPRVIIAGFG…AGVEKPERET (120 aa)). The disordered stretch occupies residues 597–620 (GWQGTEEGKHTGNMADEPETKPSS).

The protein belongs to the monovalent cation:proton antiporter 2 (CPA2) transporter (TC 2.A.37) family. KefC subfamily. As to quaternary structure, homodimer. Interacts with the regulatory subunit KefF.

Its subcellular location is the cell inner membrane. Pore-forming subunit of a potassium efflux system that confers protection against electrophiles. Catalyzes K(+)/H(+) antiport. The polypeptide is Glutathione-regulated potassium-efflux system protein KefC (Escherichia coli O7:K1 (strain IAI39 / ExPEC)).